The chain runs to 876 residues: Alanine--tRNA ligase (876 aa).

4 residues coordinate Zn(2+): His565, His569, Cys667, and His671.

It belongs to the class-II aminoacyl-tRNA synthetase family. Requires Zn(2+) as cofactor.

Its subcellular location is the cytoplasm. It catalyses the reaction tRNA(Ala) + L-alanine + ATP = L-alanyl-tRNA(Ala) + AMP + diphosphate. Its function is as follows. Catalyzes the attachment of alanine to tRNA(Ala) in a two-step reaction: alanine is first activated by ATP to form Ala-AMP and then transferred to the acceptor end of tRNA(Ala). Also edits incorrectly charged Ser-tRNA(Ala) and Gly-tRNA(Ala) via its editing domain. This chain is Alanine--tRNA ligase, found in Staphylococcus aureus (strain MRSA252).